The chain runs to 399 residues: 1-deoxy-D-xylulose 5-phosphate reductoisomerase (399 aa).

The NADPH site is built by threonine 11, glycine 12, serine 13, isoleucine 14, and asparagine 125. Lysine 126 contacts 1-deoxy-D-xylulose 5-phosphate. Position 127 (glutamate 127) interacts with NADPH. Position 151 (aspartate 151) interacts with Mn(2+). Residues serine 152, glutamate 153, serine 186, and histidine 209 each coordinate 1-deoxy-D-xylulose 5-phosphate. Glutamate 153 contributes to the Mn(2+) binding site. NADPH is bound at residue glycine 215. 1-deoxy-D-xylulose 5-phosphate is bound by residues serine 222, asparagine 227, lysine 228, and glutamate 231. Glutamate 231 is a Mn(2+) binding site.

Belongs to the DXR family. Mg(2+) serves as cofactor. The cofactor is Mn(2+).

It carries out the reaction 2-C-methyl-D-erythritol 4-phosphate + NADP(+) = 1-deoxy-D-xylulose 5-phosphate + NADPH + H(+). It participates in isoprenoid biosynthesis; isopentenyl diphosphate biosynthesis via DXP pathway; isopentenyl diphosphate from 1-deoxy-D-xylulose 5-phosphate: step 1/6. In terms of biological role, catalyzes the NADPH-dependent rearrangement and reduction of 1-deoxy-D-xylulose-5-phosphate (DXP) to 2-C-methyl-D-erythritol 4-phosphate (MEP). The sequence is that of 1-deoxy-D-xylulose 5-phosphate reductoisomerase from Acinetobacter baumannii (strain SDF).